The chain runs to 117 residues: NADH-ubiquinone oxidoreductase chain 3 (117 aa).

3 helical membrane-spanning segments follow: residues 5–25 (ALSS…AWVL), 57–77 (FFLL…LMPL), and 86–106 (VFTT…GLIH).

Belongs to the complex I subunit 3 family.

It is found in the mitochondrion membrane. The enzyme catalyses a ubiquinone + NADH + 5 H(+)(in) = a ubiquinol + NAD(+) + 4 H(+)(out). Core subunit of the mitochondrial membrane respiratory chain NADH dehydrogenase (Complex I) that is believed to belong to the minimal assembly required for catalysis. Complex I functions in the transfer of electrons from NADH to the respiratory chain. The immediate electron acceptor for the enzyme is believed to be ubiquinone. The protein is NADH-ubiquinone oxidoreductase chain 3 (ND3) of Lumbricus terrestris (Common earthworm).